The primary structure comprises 364 residues: MTATSPHGARLTINLRALAANWRRLAEEAAGAECAAVIKADAYGTGIDRAGPALWRAGCRTFFVAHLSEAERARAALPEAVIYVLNGLPPGSAPAYRDRALRPVLGSREEIEEWAAFCRARGERLPAALHVDTGMNRLGLSPDEALALAGGAALEDVAASLLVSHLVSAEVPGDAVTARQVADFARVAAAFPGLTASLGNSAGTFLGARARHEMVRPGYALYGGNPRPGGPNPMRPVVRLDATILQVRDVPPGATAGYNARWTAPGPRRLATLSLGYADGYPRAGSGRAEAVVAGRRCPVVGTISMDLVILDVTDAPPEAARRGARATLIGEGLDIDEVGQRAGTIGYEILTNLGRRSERAYID.

K39 functions as the Proton acceptor; specific for D-alanine in the catalytic mechanism. K39 is modified (N6-(pyridoxal phosphate)lysine). R137 contributes to the substrate binding site. Y258 functions as the Proton acceptor; specific for L-alanine in the catalytic mechanism. M306 lines the substrate pocket.

The protein belongs to the alanine racemase family. Pyridoxal 5'-phosphate serves as cofactor.

It carries out the reaction L-alanine = D-alanine. Its pathway is amino-acid biosynthesis; D-alanine biosynthesis; D-alanine from L-alanine: step 1/1. In terms of biological role, catalyzes the interconversion of L-alanine and D-alanine. May also act on other amino acids. In Methylobacterium sp. (strain 4-46), this protein is Alanine racemase (alr).